Here is a 312-residue protein sequence, read N- to C-terminus: tRNA dimethylallyltransferase (312 aa).

14-21 (GPTASGKS) is an ATP binding site. 16 to 21 (TASGKS) is a substrate binding site. Interaction with substrate tRNA stretches follow at residues 39-42 (DSSL) and 163-167 (QRLQR).

It belongs to the IPP transferase family. As to quaternary structure, monomer. Mg(2+) is required as a cofactor.

The enzyme catalyses adenosine(37) in tRNA + dimethylallyl diphosphate = N(6)-dimethylallyladenosine(37) in tRNA + diphosphate. In terms of biological role, catalyzes the transfer of a dimethylallyl group onto the adenine at position 37 in tRNAs that read codons beginning with uridine, leading to the formation of N6-(dimethylallyl)adenosine (i(6)A). This Methylococcus capsulatus (strain ATCC 33009 / NCIMB 11132 / Bath) protein is tRNA dimethylallyltransferase.